We begin with the raw amino-acid sequence, 224 residues long: Probable Brix domain-containing ribosomal biogenesis protein (224 aa).

Residues 1 to 196 enclose the Brix domain; sequence MMLITTSHRP…IWIMEDGRRW (196 aa).

Functionally, probably involved in the biogenesis of the ribosome. The chain is Probable Brix domain-containing ribosomal biogenesis protein from Pyrococcus abyssi (strain GE5 / Orsay).